The chain runs to 241 residues: 2-C-methyl-D-erythritol 4-phosphate cytidylyltransferase (241 aa).

Belongs to the IspD/TarI cytidylyltransferase family. IspD subfamily. In terms of assembly, homodimer.

The catalysed reaction is 2-C-methyl-D-erythritol 4-phosphate + CTP + H(+) = 4-CDP-2-C-methyl-D-erythritol + diphosphate. Its pathway is isoprenoid biosynthesis; isopentenyl diphosphate biosynthesis via DXP pathway; isopentenyl diphosphate from 1-deoxy-D-xylulose 5-phosphate: step 2/6. Catalyzes the formation of 4-diphosphocytidyl-2-C-methyl-D-erythritol from CTP and 2-C-methyl-D-erythritol 4-phosphate (MEP). This Yersinia pseudotuberculosis serotype I (strain IP32953) protein is 2-C-methyl-D-erythritol 4-phosphate cytidylyltransferase.